Reading from the N-terminus, the 434-residue chain is 3-phosphoshikimate 1-carboxyvinyltransferase (434 aa).

Residues lysine 15, serine 16, and arginine 20 each contribute to the 3-phosphoshikimate site. Position 15 (lysine 15) interacts with phosphoenolpyruvate. Phosphoenolpyruvate is bound by residues glycine 96 and arginine 124. 3-phosphoshikimate-binding residues include serine 169, glutamine 171, serine 195, aspartate 319, and lysine 346. Glutamine 171 serves as a coordination point for phosphoenolpyruvate. The active-site Proton acceptor is aspartate 319. Residues arginine 350 and arginine 394 each contribute to the phosphoenolpyruvate site.

It belongs to the EPSP synthase family. As to quaternary structure, monomer.

The protein localises to the cytoplasm. The catalysed reaction is 3-phosphoshikimate + phosphoenolpyruvate = 5-O-(1-carboxyvinyl)-3-phosphoshikimate + phosphate. The protein operates within metabolic intermediate biosynthesis; chorismate biosynthesis; chorismate from D-erythrose 4-phosphate and phosphoenolpyruvate: step 6/7. Its function is as follows. Catalyzes the transfer of the enolpyruvyl moiety of phosphoenolpyruvate (PEP) to the 5-hydroxyl of shikimate-3-phosphate (S3P) to produce enolpyruvyl shikimate-3-phosphate and inorganic phosphate. The chain is 3-phosphoshikimate 1-carboxyvinyltransferase from Chlorobaculum parvum (strain DSM 263 / NCIMB 8327) (Chlorobium vibrioforme subsp. thiosulfatophilum).